The sequence spans 205 residues: Large ribosomal subunit protein bL25 (205 aa).

It belongs to the bacterial ribosomal protein bL25 family. CTC subfamily. As to quaternary structure, part of the 50S ribosomal subunit; part of the 5S rRNA/L5/L18/L25 subcomplex. Contacts the 5S rRNA. Binds to the 5S rRNA independently of L5 and L18.

Functionally, this is one of the proteins that binds to the 5S RNA in the ribosome where it forms part of the central protuberance. The polypeptide is Large ribosomal subunit protein bL25 (Stutzerimonas stutzeri (strain A1501) (Pseudomonas stutzeri)).